The primary structure comprises 1812 residues: MSTCLLTSSFLSTSARAASFKDLVSKTPAWEKHNSTQQQNIWKDLTPNEKIKKWQEAALVPSFTQAQNDLGIKYKETDLSSFLDNTRHKARQARAEILLYIERVKQQDFDTKKQEYINQGVVPTDIEAATNLGISYDPSKIDNNVEHDQKVRRAEKDKKAVIELYISSINRDIKYKHYVDNDIIPEMQEVRTALNMNKDEAQSFVASIRTEIMENAKGQYIADSHIPTEKELKKKFGISRDDNRDGYIKSIRLKVMDKEKPQYIADSHIPTEKELEQKFGADKGEATNYIASIATQMMLGKKSYYIDNNIIPNADELMNEFKIGPVKTASYINQIRAGIEANQFLNNNDTTKPSTGRSQKKSGSKNDHWYMSNQSIHNTGTSSRIFTGREKKQRYFFDPISTFKTHFNTKANKGNLTQSQHSINRIIQQEENIEEFKNLIKTDPIIALTLQVDSSYKQEAVTTILSDFNDDTIQRVLFSNDKGQLDFNTNIDVKNRPILQELLENSSSEEKTKFAERIQDYATRNISNSQFEEKARLDLIKLAASKDKSSVENFLTLQLELKNIMQPYIVNSVYILTPEIVKEINIELKNKGLIRDSLTKDYMIKLAKEVSNHTLNSVIKVILSDSNILSNETNKILGLAVGNNANNLEQTQSGIPNPPPLPLNGGIPNPPPLPLNGSMPPPPPLHSQGFSSNSKHFDLNQLQTEYPHIHSLYIQFTHNTTVQSKAPLQPTASSATSTVRSTPETAYAKLYAEYRTETGGTKANDLQDQLIKRQADLTNVIRQILTESYANQGADEKTLLNLFSISTPEIAEKAKEAFNTLAQDQYIKDITVNGKKTITSEEIIKNLFNEDTDDAVKRILLSSCKISEELKRPIKLQFNQSELIRELQGKQNPFEQLEFAYINAKNFDQDIFGNRVDELINNPNILTIVQQATFLITEDTNLRKTINSDQAQAKLDDLRTAILSTIKFEELITANLPQHDFIAIVKEKDPELLKEFLKATTLKVTGNNNLDQLRLALPSFKGMSNEQIRILSNKLKMPIILKALKECSQEKATKYIHTGNMPPPPPPLPDSQDLELAYLTSLGITKFNANTSTLKTTPKTYHFSSDIALRYKEFTLSGQKSAGYKAKYSDADLLKKAIVESVAFEHSKNLSKAHQNNKYFEQIQEAVDTMYSSFIGPRTEIGQKIHNIYTSKLLELTKDKEFIKYVEDNIILSKKLTEAFTSADSDFIDSRTGLGQKIHDIYIQQLTKYPEEEVKEAFNTANPDFIGPRTEIGQEVHNIYKSQLLELTKDQELSLFTQQVLAESTELERKYGSDIQSGNSNNEKKVGRLDQEKLQSFKQENEATNDASSTKDDTQPEDSNKKSEQSDSKTALSPRLLSSNDSKNDKSSDDKKSLLALRSSDEDDTGYATDEEELEESNSTTNEELEESNSTTNEELEESNSTTNEELEESNSTTNEELKKDVVLESEDEAIDVSFKTEAITEQDEVTQRQQISDDTSGKVAILVQATSTLHKPVHYNINDRLTVAAIGAGDEETSINRGVWISGLYGINKQRIWKNIPKYQNRTTGITIGIDAEFINSHDVIGIAYSRLESQIKYNKKLGKTTVNGHLLSIYSLKELIKGFSLQTITSYGHNYIKNRSKNINNIIGKYQNNNLSFQTLLNYKYRTKYDLHFIPNIGFQYDYSRASNYKEYNVDIENLMIQKKSNQLFESSLGGKIVFKPIVTTNNIVLTPSLYGNIEHHFNNKNTKVNAKATFKGQTLQETIITLKQPKLGYNIGSNILMSRKNINVLLEYNYYTHRKYQSHQGLIKLKVNL.

Positions 1–17 (MSTCLLTSSFLSTSARA) are cleaved as a signal peptide. Composition is skewed to polar residues over residues 344–357 (FLNNNDTTKPSTGR) and 371–382 (MSNQSIHNTGTS). 3 disordered regions span residues 344 to 382 (FLNNNDTTKPSTGRSQKKSGSKNDHWYMSNQSIHNTGTS), 648 to 691 (LEQT…QGFS), and 1338 to 1462 (KQEN…KKDV). Residues 656 to 685 (PNPPPLPLNGGIPNPPPLPLNGSMPPPPPL) show a composition bias toward pro residues. 2 stretches are compositionally biased toward basic and acidic residues: residues 1349–1367 (STKDDTQPEDSNKKSEQSD) and 1382–1393 (SKNDKSSDDKKS). Acidic residues predominate over residues 1401-1416 (DEDDTGYATDEEELEE). Low complexity predominate over residues 1417–1455 (SNSTTNEELEESNSTTNEELEESNSTTNEELEESNSTTN). An Autotransporter domain is found at 1533-1812 (ETSINRGVWI…QGLIKLKVNL (280 aa)).

It localises to the cell outer membrane. The protein is Putative surface cell antigen sca2 (sca2) of Rickettsia sibirica (strain ATCC VR-151 / 246).